The primary structure comprises 200 residues: NAD(P)H dehydrogenase (quinone) (200 aa).

The region spanning 4–191 (ILVLYHSLWG…TIARFQGRHV (188 aa)) is the Flavodoxin-like domain. Residues 10 to 15 (SLWGHV) and 79 to 81 (TRF) each bind FMN. Tryptophan 12 is an NAD(+) binding site. Substrate is bound at residue tryptophan 99. Residues 114-120 (STATQHG) and histidine 135 contribute to the FMN site.

The protein belongs to the WrbA family. FMN serves as cofactor.

It catalyses the reaction a quinone + NADH + H(+) = a quinol + NAD(+). The catalysed reaction is a quinone + NADPH + H(+) = a quinol + NADP(+). This is NAD(P)H dehydrogenase (quinone) from Acidithiobacillus ferrooxidans (strain ATCC 53993 / BNL-5-31) (Leptospirillum ferrooxidans (ATCC 53993)).